A 482-amino-acid polypeptide reads, in one-letter code: 23S rRNA (uracil(1939)-C(5))-methyltransferase RlmD (482 aa).

[4Fe-4S] cluster-binding residues include Cys85, Cys95, Cys98, and Cys177. Gln285, Phe314, Asn319, Glu335, Asn370, and Asp391 together coordinate S-adenosyl-L-methionine. Catalysis depends on Cys438, which acts as the Nucleophile.

This sequence belongs to the class I-like SAM-binding methyltransferase superfamily. RNA M5U methyltransferase family. RlmD subfamily.

It carries out the reaction uridine(1939) in 23S rRNA + S-adenosyl-L-methionine = 5-methyluridine(1939) in 23S rRNA + S-adenosyl-L-homocysteine + H(+). In terms of biological role, catalyzes the formation of 5-methyl-uridine at position 1939 (m5U1939) in 23S rRNA. The chain is 23S rRNA (uracil(1939)-C(5))-methyltransferase RlmD from Acidovorax sp. (strain JS42).